The primary structure comprises 312 residues: Taste receptor type 2 member 62 (312 aa).

Topologically, residues Met1–Leu4 are extracellular. The chain crosses the membrane as a helical span at residues Pro5 to Leu27. The Cytoplasmic portion of the chain corresponds to Val28–Arg39. Residues Met40–Ala62 form a helical membrane-spanning segment. At Met63 to Asn81 the chain is on the extracellular side. Residues Ile82–Val104 form a helical membrane-spanning segment. The Cytoplasmic portion of the chain corresponds to Lys105–Lys127. The chain crosses the membrane as a helical span at residues Leu128–Phe150. Over Gly151 to Gly182 the chain is Extracellular. The N-linked (GlcNAc...) asparagine glycan is linked to Asn162. Residues Phe183–Trp205 form a helical membrane-spanning segment. Topologically, residues Gln206–Ser231 are cytoplasmic. A helical transmembrane segment spans residues Leu232–Ile254. Topologically, residues Asn255–Asn258 are extracellular. The chain crosses the membrane as a helical span at residues His259 to Leu281. Topologically, residues Arg282–Pro312 are cytoplasmic.

The protein belongs to the G-protein coupled receptor T2R family.

It localises to the membrane. In terms of biological role, receptor that may play a role in the perception of bitterness and is gustducin-linked. May play a role in sensing the chemical composition of the gastrointestinal content. The activity of this receptor may stimulate alpha gustducin, mediate PLC-beta-2 activation and lead to the gating of TRPM5. The chain is Taste receptor type 2 member 62 (TAS2R62) from Pan paniscus (Pygmy chimpanzee).